Here is a 131-residue protein sequence, read N- to C-terminus: Flagellar assembly factor FliW (131 aa).

The protein belongs to the FliW family. In terms of assembly, interacts with translational regulator CsrA and flagellin(s).

It is found in the cytoplasm. Its function is as follows. Acts as an anti-CsrA protein, binds CsrA and prevents it from repressing translation of its target genes, one of which is flagellin. Binds to flagellin and participates in the assembly of the flagellum. This is Flagellar assembly factor FliW from Campylobacter lari (strain RM2100 / D67 / ATCC BAA-1060).